We begin with the raw amino-acid sequence, 571 residues long: Podocalyxin (571 aa).

A signal peptide spans 1–22 (MRPAPPPPLLLLLLLLPPPSLS). Residues 23-474 (HDGTIIAATS…EETEDRFSMP (452 aa)) lie on the Extracellular side of the membrane. Residues 94–361 (NTVIAPDQDE…QGDDRIKCES (268 aa)) form a disordered region. Positions 106–116 (STNPTIATSDS) are enriched in polar residues. Residue Asn-123 is glycosylated (N-linked (GlcNAc...) asparagine). 4 stretches are compositionally biased toward polar residues: residues 126–144 (ILPS…TQTA), 151–169 (NPGT…QTTS), 176–203 (KPSS…STTL), and 218–245 (TASS…SSVT). Asn-199 is a glycosylation site (N-linked (GlcNAc...) asparagine). Low complexity predominate over residues 282-300 (TTSLPSETESLESPSSESP). The segment covering 301–311 (SQPPKLRPTGP) has biased composition (pro residues). Over residues 312 to 322 (PSSGSSGPAAS) the composition is skewed to low complexity. Asn-373 and Asn-383 each carry an N-linked (GlcNAc...) asparagine glycan. The chain crosses the membrane as a helical span at residues 475-495 (LIITIVCMASFLLLVAALYGC). Topologically, residues 496–571 (CHQRLSQRKD…DLDEEEDTHL (76 aa)) are cytoplasmic. Thr-531 bears the Phosphothreonine mark. Residue Ser-550 is modified to Phosphoserine. Phosphothreonine is present on Thr-569.

The protein belongs to the podocalyxin family. In terms of assembly, found in a complex with EZR, PODXL and NHERF2. Associates with the actin cytoskeleton through complex formation with EZR and NHERF2. Interacts (via the C-terminal PDZ-binding motif DTHL) with NHERF1 (via the PDZ domains); interaction is not detected in glomerular epithelium cells. Interacts (via the C-terminal PDZ-binding motif DTHL) with NHERF2 (via the PDZ 1 domain); interaction is detected in glomerular epithelium cells. Interacts with EZR. Monomer; when associated with the membrane raft. Oligomer; when integrated in the apical membrane. Interacts with NHERF2. Interacts (via the C-terminal PDZ-binding motif DTHL) with NHERF1 (via the PDZ domains); the interaction take place early in the secretory pathway and is necessary for its apical membrane sorting. Post-translationally, N- and O-linked glycosylated. Sialoglycoprotein. As to expression, expressed in glomerular and tubular epithelial cells and peritubular capillaries of the kidney (at protein level). Expressed in heart, lung, renal cortex and medulla, kidney and muscle.

It is found in the apical cell membrane. Its subcellular location is the membrane raft. It localises to the cell projection. The protein resides in the lamellipodium. The protein localises to the filopodium. It is found in the ruffle. Its subcellular location is the microvillus. It localises to the membrane. Its function is as follows. Involved in the regulation of both adhesion and cell morphology and cancer progression. Functions as an anti-adhesive molecule that maintains an open filtration pathway between neighboring foot processes in the podocyte by charge repulsion. Acts as a pro-adhesive molecule, enhancing the adherence of cells to immobilized ligands, increasing the rate of migration and cell-cell contacts in an integrin-dependent manner. Induces the formation of apical actin-dependent microvilli. Involved in the formation of a preapical plasma membrane subdomain to set up initial epithelial polarization and the apical lumen formation during renal tubulogenesis. Plays a role in cancer development and aggressiveness by inducing cell migration and invasion through its interaction with the actin-binding protein EZR. Affects EZR-dependent signaling events, leading to increased activities of the MAPK and PI3K pathways in cancer cells. This chain is Podocalyxin (PODXL), found in Canis lupus familiaris (Dog).